The sequence spans 139 residues: ATP synthase epsilon chain, chloroplastic (139 aa).

It belongs to the ATPase epsilon chain family. As to quaternary structure, F-type ATPases have 2 components, CF(1) - the catalytic core - and CF(0) - the membrane proton channel. CF(1) has five subunits: alpha(3), beta(3), gamma(1), delta(1), epsilon(1). CF(0) has three main subunits: a, b and c.

The protein localises to the plastid. It is found in the chloroplast thylakoid membrane. In terms of biological role, produces ATP from ADP in the presence of a proton gradient across the membrane. The polypeptide is ATP synthase epsilon chain, chloroplastic (Welwitschia mirabilis (Tree tumbo)).